The sequence spans 885 residues: Leucine--tRNA ligase (885 aa).

Residues 46-56 (PYPSGALHMGH) carry the 'HIGH' region motif. Residues 638–642 (KMSKS) carry the 'KMSKS' region motif. ATP is bound at residue K641.

It belongs to the class-I aminoacyl-tRNA synthetase family.

The protein resides in the cytoplasm. The catalysed reaction is tRNA(Leu) + L-leucine + ATP = L-leucyl-tRNA(Leu) + AMP + diphosphate. In Xanthomonas campestris pv. campestris (strain B100), this protein is Leucine--tRNA ligase.